The primary structure comprises 1003 residues: Rho-associated protein kinase 1 (1003 aa).

Residues 1–28 (VAPVVPDLSSDIDTSNFDDLEEDKGEEE) are disordered. Residues 1-58 (VAPVVPDLSSDIDTSNFDDLEEDKGEEETFPIPKAFVGNQLPFVGFTYYSNRRYLSSA) form the AGC-kinase C-terminal domain. The segment covering 16 to 28 (NFDDLEEDKGEEE) has biased composition (acidic residues). Residues 17 to 376 (FDDLEEDKGE…KKLKEEREAR (360 aa)) form an interaction with FHOD1 region. Residues 71-341 (KSLQESLQKT…RLEQEVNEHK (271 aa)) are a coiled coil. Positions 128–205 (STVSQIEKEK…LEEANDLLRT (78 aa)) constitute an REM-1 domain. N6-acetyllysine is present on K296. An SHROOM3 binding region spans residues 356-595 (EAKSVAMCEM…TVSRLEEANS (240 aa)). Residues 598–664 (TKDIEILRRE…LAEIMNRKDF (67 aa)) form the RhoBD domain. The interval 647–659 (LKTQAVNKLAEIM) is RHOA binding. Residues 660 to 751 (NRKDFKIDRK…KLLDLSDSTS (92 aa)) adopt a coiled-coil conformation. Residues S754 and S757 each carry the phosphoserine modification. The segment at 764–1003 (NLPESRIEGW…VVKNTSGKTR (240 aa)) is auto-inhibitory. Residues 767-966 (ESRIEGWLSV…WVTHLVKKIP (200 aa)) enclose the PH domain. A Phorbol-ester/DAG-type zinc finger spans residues 877–930 (GHEFIPTLYHFPANCDACAKPLWHVFKPPPALECRRCHVKCHRDHLDKKEDLIC). The segment at 968 to 1003 (NPPSGFVRASPRTLSTRSTANQSFRKVVKNTSGKTR) is disordered. The residue at position 977 (S977) is a Phosphoserine. The segment covering 979-1003 (RTLSTRSTANQSFRKVVKNTSGKTR) has biased composition (polar residues).

This sequence belongs to the protein kinase superfamily. AGC Ser/Thr protein kinase family. As to quaternary structure, homodimer. Interacts with RHOA (activated by GTP), RHOB, RHOC, GEM, MYLC2B, RHOE, PPP1R12A, LIMK1, LIMK2, TSG101, CHORDC1, DAPK3, PFN1, PTEN and JIP3. Interacts with ITGB1BP1 (via N-terminus and PTB domain). Interacts with FHOD1 in a Src-dependent manner. Interacts with SHROOM3. Mg(2+) serves as cofactor. Post-translationally, autophosphorylated on serine and threonine residues. Cleaved by caspase-3 during apoptosis. This leads to constitutive activation of the kinase and membrane blebbing.

It is found in the cytoplasm. The protein localises to the cytoskeleton. Its subcellular location is the microtubule organizing center. The protein resides in the centrosome. It localises to the centriole. It is found in the golgi apparatus membrane. The protein localises to the cell projection. Its subcellular location is the bleb. The protein resides in the cell membrane. It localises to the lamellipodium. It is found in the ruffle. It carries out the reaction L-seryl-[protein] + ATP = O-phospho-L-seryl-[protein] + ADP + H(+). It catalyses the reaction L-threonyl-[protein] + ATP = O-phospho-L-threonyl-[protein] + ADP + H(+). Its activity is regulated as follows. Activated by RHOA binding. Inhibited by Y-27632. Functionally, protein kinase which is a key regulator of actin cytoskeleton and cell polarity. Involved in regulation of smooth muscle contraction, actin cytoskeleton organization, stress fiber and focal adhesion formation, neurite retraction, cell adhesion and motility via phosphorylation of DAPK3, GFAP, LIMK1, LIMK2, MYL9/MLC2, TPPP, PFN1 and PPP1R12A. Phosphorylates FHOD1 and acts synergistically with it to promote SRC-dependent non-apoptotic plasma membrane blebbing. Phosphorylates JIP3 and regulates the recruitment of JNK to JIP3 upon UVB-induced stress. Acts as a suppressor of inflammatory cell migration by regulating PTEN phosphorylation and stability. Acts as a negative regulator of VEGF-induced angiogenic endothelial cell activation. Required for centrosome positioning and centrosome-dependent exit from mitosis. Plays a role in terminal erythroid differentiation. May regulate closure of the eyelids and ventral body wall by inducing the assembly of actomyosin bundles. Promotes keratinocyte terminal differentiation. Involved in osteoblast compaction through the fibronectin fibrillogenesis cell-mediated matrix assembly process, essential for osteoblast mineralization. In Pan troglodytes (Chimpanzee), this protein is Rho-associated protein kinase 1 (ROCK1).